The chain runs to 255 residues: Protein patched homolog 2 (255 aa).

Residues 1–197 (SLLQGGSAYL…LNDIMKSFSD (197 aa)) lie on the Extracellular side of the membrane. N-linked (GlcNAc...) asparagine glycosylation is found at Asn147 and Asn175. Residues 198-218 (VSVIRVAGGYLLMLAYACVTM) traverse the membrane as a helical segment. The 57-residue stretch at 199-255 (SVIRVAGGYLLMLAYACVTMLRWDCTKSQGAVGLAGVLLVALSVASGLGLCSLLGIS) folds into the SSD domain. Topologically, residues 219-227 (LRWDCTKSQ) are cytoplasmic. A helical membrane pass occupies residues 228 to 248 (GAVGLAGVLLVALSVASGLGL). The Extracellular portion of the chain corresponds to 249 to 255 (CSLLGIS).

It belongs to the patched family. As to expression, in the eye, detected in neural retina, iris, retinal pigment epithelium, but not in lens.

It localises to the membrane. Functionally, may act as a receptor for sonic hedgehog (SHH). The chain is Protein patched homolog 2 (PTC2) from Cynops pyrrhogaster (Japanese fire-bellied newt).